The sequence spans 86 residues: U15-lycotoxin-Ls1g (86 aa).

An N-terminal signal peptide occupies residues M1–S20. Residues D21 to A66 form the WAP domain. Disulfide bonds link C24–C54, C32–C58, C41–C53, C42–C80, and C47–C62.

This sequence belongs to the venom protein 11 family. 01 (wap-1) subfamily. Post-translationally, contains 5 disulfide bonds. Expressed by the venom gland.

The protein localises to the secreted. In terms of biological role, has antibacterial activity. The protein is U15-lycotoxin-Ls1g of Lycosa singoriensis (Wolf spider).